A 279-amino-acid chain; its full sequence is HTH-type transcriptional regulator HdfR (279 aa).

One can recognise an HTH lysR-type domain in the interval 1-58 (MDTELLKTFLEVSRTRHFGRAAESLYLTQSAVSFRIRQLENQLGVNLFTRHRNNIRLT). A DNA-binding region (H-T-H motif) is located at residues 18-37 (FGRAAESLYLTQSAVSFRIR).

It belongs to the LysR transcriptional regulatory family.

Its function is as follows. Negatively regulates the transcription of the flagellar master operon flhDC by binding to the upstream region of the operon. The chain is HTH-type transcriptional regulator HdfR from Escherichia coli (strain SE11).